The primary structure comprises 602 residues: Potassium-transporting ATPase potassium-binding subunit (602 aa).

4 consecutive transmembrane segments (helical) span residues 5 to 25, 65 to 85, 136 to 156, and 179 to 199; these read AMLQLGLFLVVLIALAWPLGA, GYAVALILFNVLGVAAVYALQ, GLTVQNFVSAATGAAVVIALI, and LYVLLPLAVVFALVFTQQGAI. Positions 221 to 248 are disordered; it reads QDAKGNPVLGKDGKPVMEDKTSQTQTLP. The span at 231–241 shows a compositional bias: basic and acidic residues; sequence KDGKPVMEDKT. Helical transmembrane passes span 283–303, 312–332, 419–439, 458–478, 523–543, and 566–586; these read LANFLQDIAIFLIPAALCFLF, QGWAILAAMTIMFATAVVVET, GLYGMLIFAILAVFIAGLMVG, AITILVTPTLVLALTAIAVSL, IMTGLAMFFGRFFMIVPILAI, and LFVTLLIGTVLLVGALNYVPA.

The protein belongs to the KdpA family. The system is composed of three essential subunits: KdpA, KdpB and KdpC.

It localises to the cell inner membrane. Functionally, part of the high-affinity ATP-driven potassium transport (or Kdp) system, which catalyzes the hydrolysis of ATP coupled with the electrogenic transport of potassium into the cytoplasm. This subunit binds the periplasmic potassium ions and delivers the ions to the membrane domain of KdpB through an intramembrane tunnel. The sequence is that of Potassium-transporting ATPase potassium-binding subunit from Chromobacterium violaceum (strain ATCC 12472 / DSM 30191 / JCM 1249 / CCUG 213 / NBRC 12614 / NCIMB 9131 / NCTC 9757 / MK).